Reading from the N-terminus, the 414-residue chain is MSAAALEEIGIAPLQENTSLRPPPLPATCVDVSSDDYIKLTTLERQLAHLQVMEDYIKLETRNLEKELLHAQEEVKRIQSVPLVIGQFLEAVDQNHAIVGSTTGSNYYVRVLSILDRELLKPGCSVALHKYSNALVDVLPPEADSSIQMLRPDEKPDISYGDIGGLDMQKQEVREAVELPLTHGELYQQIGIDPPRGVLMYGPPGCGKTMLAKAVAANTAASFIRVVGSEFVQKYLGEGPRMVRDVFRLAKENSPSIIFIDEIDAIATKRFDAQTGADREVQRILLELLNQMDGFDQSTNVKVIMATNRQDTLDPALLRPGRLDRKIEFPLPDRRQKRLVFSTVCSRMNLSDDVDLEDWVARPDKISGADINSICQEAGMQAVRENRYVVLTKDLEKAYKNVVKKDTNDFEFYK.

ATP is bound at residue 202-209 (GPPGCGKT).

The protein belongs to the AAA ATPase family.

Its subcellular location is the cytoplasm. The protein resides in the nucleus. In terms of biological role, the 26S proteasome is involved in the ATP-dependent degradation of ubiquitinated proteins. The regulatory (or ATPase) complex confers ATP dependency and substrate specificity to the 26S complex. The chain is Probable 26S proteasome regulatory subunit 6B (rpt-3) from Caenorhabditis elegans.